The chain runs to 330 residues: Succinylglutamate desuccinylase (330 aa).

3 residues coordinate Zn(2+): H53, E56, and H147. Residue E210 is part of the active site.

This sequence belongs to the AspA/AstE family. Succinylglutamate desuccinylase subfamily. The cofactor is Zn(2+).

The catalysed reaction is N-succinyl-L-glutamate + H2O = L-glutamate + succinate. Its pathway is amino-acid degradation; L-arginine degradation via AST pathway; L-glutamate and succinate from L-arginine: step 5/5. In terms of biological role, transforms N(2)-succinylglutamate into succinate and glutamate. This Yersinia pseudotuberculosis serotype O:1b (strain IP 31758) protein is Succinylglutamate desuccinylase.